Reading from the N-terminus, the 142-residue chain is Transcriptional regulator MraZ (142 aa).

SpoVT-AbrB domains follow at residues 5–47 and 76–119; these read EYNH…PLGE and ANEV…SKEK.

Belongs to the MraZ family. In terms of assembly, forms oligomers.

The protein resides in the cytoplasm. The protein localises to the nucleoid. In Clostridium acetobutylicum (strain ATCC 824 / DSM 792 / JCM 1419 / IAM 19013 / LMG 5710 / NBRC 13948 / NRRL B-527 / VKM B-1787 / 2291 / W), this protein is Transcriptional regulator MraZ.